A 526-amino-acid polypeptide reads, in one-letter code: Peptide chain release factor 3 (526 aa).

The 270-residue stretch at 8–277 (GKRRTFAIIS…GLTDWAPAPQ (270 aa)) folds into the tr-type G domain. Residues 17–24 (SHPDAGKT), 85–89 (DTPGH), and 139–142 (NKLD) each bind GTP.

It belongs to the TRAFAC class translation factor GTPase superfamily. Classic translation factor GTPase family. PrfC subfamily.

It is found in the cytoplasm. Functionally, increases the formation of ribosomal termination complexes and stimulates activities of RF-1 and RF-2. It binds guanine nucleotides and has strong preference for UGA stop codons. It may interact directly with the ribosome. The stimulation of RF-1 and RF-2 is significantly reduced by GTP and GDP, but not by GMP. This Aliivibrio fischeri (strain MJ11) (Vibrio fischeri) protein is Peptide chain release factor 3.